Reading from the N-terminus, the 98-residue chain is PqqA binding protein (98 aa).

This sequence belongs to the PqqD family. Monomer. Interacts with PqqE.

It participates in cofactor biosynthesis; pyrroloquinoline quinone biosynthesis. Functions as a PqqA binding protein and presents PqqA to PqqE, in the pyrroloquinoline quinone (PQQ) biosynthetic pathway. This chain is PqqA binding protein, found in Rhizobium meliloti (strain 1021) (Ensifer meliloti).